The sequence spans 494 residues: Transcriptional regulator of yeast form adherence 3 (494 aa).

An SPX domain is found at 1–360 (MKFAKTLERT…SLGIQKTFPK (360 aa)). The segment at 398–437 (CPICMNIAYKPIRLSCGHLFCVRCLVKMKQDDKTSCPLCR) adopts an RING-type zinc-finger fold.

Its subcellular location is the nucleus. Transcription factor required for yeast cell adherence to silicone substrate. This is Transcriptional regulator of yeast form adherence 3 (TRY3) from Candida albicans (strain SC5314 / ATCC MYA-2876) (Yeast).